The primary structure comprises 219 residues: Cytochrome c biogenesis ATP-binding export protein CcmA (219 aa).

An ABC transporter domain is found at isoleucine 10–valine 218. Glycine 42–threonine 49 lines the ATP pocket.

This sequence belongs to the ABC transporter superfamily. CcmA exporter (TC 3.A.1.107) family. The complex is composed of two ATP-binding proteins (CcmA) and two transmembrane proteins (CcmB).

Its subcellular location is the cell inner membrane. It carries out the reaction heme b(in) + ATP + H2O = heme b(out) + ADP + phosphate + H(+). In terms of biological role, part of the ABC transporter complex CcmAB involved in the biogenesis of c-type cytochromes; once thought to export heme, this seems not to be the case, but its exact role is uncertain. Responsible for energy coupling to the transport system. This Colwellia psychrerythraea (strain 34H / ATCC BAA-681) (Vibrio psychroerythus) protein is Cytochrome c biogenesis ATP-binding export protein CcmA.